Reading from the N-terminus, the 719-residue chain is Photosystem I P700 chlorophyll a apoprotein A1 (719 aa).

8 helical membrane passes run 60–83 (IFSA…FHGA), 146–169 (LYCT…FHYH), 185–209 (LNHH…HVSL), 281–299 (TAHH…GHMY), 336–359 (WHAQ…HHMY), 375–401 (LSLF…IFMV), 423–445 (AIIS…LYIH), and 521–539 (FLVH…LILL). [4Fe-4S] cluster contacts are provided by Cys563 and Cys572. A run of 2 helical transmembrane segments spans residues 579-600 (HVFL…HFSW) and 654-676 (LSAY…MFLF). Chlorophyll a' is bound at residue His665. Chlorophyll a is bound by residues Met673 and Tyr681. Residue Trp682 coordinates phylloquinone. A helical membrane pass occupies residues 714 to 719 (AVGVAH).

Belongs to the PsaA/PsaB family. In terms of assembly, the PsaA/B heterodimer binds the P700 chlorophyll special pair and subsequent electron acceptors. PSI consists of a core antenna complex that captures photons, and an electron transfer chain that converts photonic excitation into a charge separation. The eukaryotic PSI reaction center is composed of at least 11 subunits. The cofactor is P700 is a chlorophyll a/chlorophyll a' dimer, A0 is one or more chlorophyll a, A1 is one or both phylloquinones and FX is a shared 4Fe-4S iron-sulfur center..

It localises to the plastid. Its subcellular location is the chloroplast thylakoid membrane. The catalysed reaction is reduced [plastocyanin] + hnu + oxidized [2Fe-2S]-[ferredoxin] = oxidized [plastocyanin] + reduced [2Fe-2S]-[ferredoxin]. In terms of biological role, psaA and PsaB bind P700, the primary electron donor of photosystem I (PSI), as well as the electron acceptors A0, A1 and FX. PSI is a plastocyanin-ferredoxin oxidoreductase, converting photonic excitation into a charge separation, which transfers an electron from the donor P700 chlorophyll pair to the spectroscopically characterized acceptors A0, A1, FX, FA and FB in turn. Oxidized P700 is reduced on the lumenal side of the thylakoid membrane by plastocyanin. This Equisetum palustre (Marsh horsetail) protein is Photosystem I P700 chlorophyll a apoprotein A1.